Reading from the N-terminus, the 147-residue chain is Ribonuclease P protein component (147 aa).

The segment at 117 to 147 is disordered; sequence TRPRGQSSHRTRASREATSAHTTAVGEQPTQ.

The protein belongs to the RnpA family. Consists of a catalytic RNA component (M1 or rnpB) and a protein subunit.

The enzyme catalyses Endonucleolytic cleavage of RNA, removing 5'-extranucleotides from tRNA precursor.. Functionally, RNaseP catalyzes the removal of the 5'-leader sequence from pre-tRNA to produce the mature 5'-terminus. It can also cleave other RNA substrates such as 4.5S RNA. The protein component plays an auxiliary but essential role in vivo by binding to the 5'-leader sequence and broadening the substrate specificity of the ribozyme. The polypeptide is Ribonuclease P protein component (Thermobifida fusca (strain YX)).